A 503-amino-acid polypeptide reads, in one-letter code: Glycerol kinase (503 aa).

Thr-14 contacts ADP. Residues Thr-14, Thr-15, and Ser-16 each contribute to the ATP site. Thr-14 contributes to the sn-glycerol 3-phosphate binding site. Arg-18 serves as a coordination point for ADP. Positions 84, 85, 136, and 246 each coordinate sn-glycerol 3-phosphate. 5 residues coordinate glycerol: Arg-84, Glu-85, Tyr-136, Asp-246, and Gln-247. ADP-binding residues include Thr-268 and Gly-311. 4 residues coordinate ATP: Thr-268, Gly-311, Gln-315, and Gly-412. Gly-412 and Asn-416 together coordinate ADP.

This sequence belongs to the FGGY kinase family.

It catalyses the reaction glycerol + ATP = sn-glycerol 3-phosphate + ADP + H(+). It participates in polyol metabolism; glycerol degradation via glycerol kinase pathway; sn-glycerol 3-phosphate from glycerol: step 1/1. Its activity is regulated as follows. Inhibited by fructose 1,6-bisphosphate (FBP). In terms of biological role, key enzyme in the regulation of glycerol uptake and metabolism. Catalyzes the phosphorylation of glycerol to yield sn-glycerol 3-phosphate. The sequence is that of Glycerol kinase from Haemophilus influenzae (strain PittGG).